A 121-amino-acid polypeptide reads, in one-letter code: Phospholipase A2 homolog EPL_00195 (121 aa).

Intrachain disulfides connect Cys-25–Cys-114, Cys-27–Cys-43, Cys-42–Cys-94, Cys-48–Cys-121, Cys-49–Cys-87, Cys-56–Cys-80, and Cys-74–Cys-85. The interval 104–116 (KKYRIYPNFLCRG) is important for membrane-damaging activities in eukaryotes and bacteria; heparin-binding.

Belongs to the phospholipase A2 family. Group II subfamily. S49 sub-subfamily. Monomer. In terms of tissue distribution, expressed by the venom gland.

The protein resides in the secreted. In terms of biological role, snake venom phospholipase A2 homolog that lacks enzymatic activity. Shows high myotoxin activities and displays edema-inducing activities. Has cytotoxic activities against HUVEC cells (LC(50)=2.5 uL) and human lung adenocarcinoma A549 cells (LC(50)=2.9 uL). In Echis pyramidum leakeyi (Leakey's carpet viper), this protein is Phospholipase A2 homolog EPL_00195.